A 170-amino-acid polypeptide reads, in one-letter code: Crossover junction endodeoxyribonuclease RuvC (170 aa).

Active-site residues include aspartate 12, glutamate 72, and aspartate 144. Aspartate 12, glutamate 72, and aspartate 144 together coordinate Mg(2+).

Belongs to the RuvC family. Homodimer which binds Holliday junction (HJ) DNA. The HJ becomes 2-fold symmetrical on binding to RuvC with unstacked arms; it has a different conformation from HJ DNA in complex with RuvA. In the full resolvosome a probable DNA-RuvA(4)-RuvB(12)-RuvC(2) complex forms which resolves the HJ. The cofactor is Mg(2+).

It is found in the cytoplasm. The catalysed reaction is Endonucleolytic cleavage at a junction such as a reciprocal single-stranded crossover between two homologous DNA duplexes (Holliday junction).. The RuvA-RuvB-RuvC complex processes Holliday junction (HJ) DNA during genetic recombination and DNA repair. Endonuclease that resolves HJ intermediates. Cleaves cruciform DNA by making single-stranded nicks across the HJ at symmetrical positions within the homologous arms, yielding a 5'-phosphate and a 3'-hydroxyl group; requires a central core of homology in the junction. The consensus cleavage sequence is 5'-(A/T)TT(C/G)-3'. Cleavage occurs on the 3'-side of the TT dinucleotide at the point of strand exchange. HJ branch migration catalyzed by RuvA-RuvB allows RuvC to scan DNA until it finds its consensus sequence, where it cleaves and resolves the cruciform DNA. The chain is Crossover junction endodeoxyribonuclease RuvC from Nitrobacter hamburgensis (strain DSM 10229 / NCIMB 13809 / X14).